The sequence spans 566 residues: Proline--tRNA ligase (566 aa).

This sequence belongs to the class-II aminoacyl-tRNA synthetase family. ProS type 1 subfamily. As to quaternary structure, homodimer.

It localises to the cytoplasm. It catalyses the reaction tRNA(Pro) + L-proline + ATP = L-prolyl-tRNA(Pro) + AMP + diphosphate. Functionally, catalyzes the attachment of proline to tRNA(Pro) in a two-step reaction: proline is first activated by ATP to form Pro-AMP and then transferred to the acceptor end of tRNA(Pro). As ProRS can inadvertently accommodate and process non-cognate amino acids such as alanine and cysteine, to avoid such errors it has two additional distinct editing activities against alanine. One activity is designated as 'pretransfer' editing and involves the tRNA(Pro)-independent hydrolysis of activated Ala-AMP. The other activity is designated 'posttransfer' editing and involves deacylation of mischarged Ala-tRNA(Pro). The misacylated Cys-tRNA(Pro) is not edited by ProRS. The protein is Proline--tRNA ligase of Bacillus cereus (strain AH187).